We begin with the raw amino-acid sequence, 100 residues long: EKC/KEOPS complex subunit GON7 (100 aa).

Position 1 is an N-acetylmethionine (M1). The segment at 50–100 (SPVQGEAQDRVAAAPEEALDGDDEDDAEDENNIDNRTNSDGPTAKRPKPPS) is disordered. Over residues 66–81 (EALDGDDEDDAEDENN) the composition is skewed to acidic residues.

As to quaternary structure, component of the EKC/KEOPS complex composed of at least GON7, TP53RK, TPRKB, OSGEP and LAGE3; the whole complex dimerizes.

The protein resides in the nucleus. Its function is as follows. Component of the EKC/KEOPS complex that is required for the formation of a threonylcarbamoyl group on adenosine at position 37 (t(6)A37) in tRNAs that read codons beginning with adenine. The complex is probably involved in the transfer of the threonylcarbamoyl moiety of threonylcarbamoyl-AMP (TC-AMP) to the N6 group of A37. GON7 plays a supporting role to the catalytic subunit OSGEP in the complex. The polypeptide is EKC/KEOPS complex subunit GON7 (Sus scrofa (Pig)).